Consider the following 177-residue polypeptide: Small ribosomal subunit protein uS5 (177 aa).

Residues 21 to 84 (LKEKMVSVNR…DEARQRMVRV (64 aa)) enclose the S5 DRBM domain.

It belongs to the universal ribosomal protein uS5 family. As to quaternary structure, part of the 30S ribosomal subunit. Contacts proteins S4 and S8.

Its function is as follows. With S4 and S12 plays an important role in translational accuracy. Functionally, located at the back of the 30S subunit body where it stabilizes the conformation of the head with respect to the body. The sequence is that of Small ribosomal subunit protein uS5 from Nitrosomonas europaea (strain ATCC 19718 / CIP 103999 / KCTC 2705 / NBRC 14298).